We begin with the raw amino-acid sequence, 288 residues long: PAK4-inhibitor inka2 (288 aa).

The interval 159–196 (DPTDWTTSLLTRGRNRQPLVLGDNSFADLIKNWMDLPE) is inka box.

This sequence belongs to the INKA family.

It localises to the nucleus. In terms of biological role, inhibitor of the serine/threonine-protein kinase pak4/pak5. Acts by binding pak4/pak5 in a substrate-like manner, inhibiting the protein kinase activity. In Danio rerio (Zebrafish), this protein is PAK4-inhibitor inka2.